The chain runs to 293 residues: Nitrogenase iron protein (293 aa).

Position 10 to 17 (10 to 17 (GKGGIGKS)) interacts with ATP. Cys-98 contacts [4Fe-4S] cluster. Arg-101 carries the post-translational modification ADP-ribosylarginine; by dinitrogenase reductase ADP-ribosyltransferase. [4Fe-4S] cluster is bound at residue Cys-133.

The protein belongs to the NifH/BchL/ChlL family. In terms of assembly, homodimer. Requires [4Fe-4S] cluster as cofactor. In terms of processing, the reversible ADP-ribosylation of Arg-101 inactivates the nitrogenase reductase and regulates nitrogenase activity.

The catalysed reaction is N2 + 8 reduced [2Fe-2S]-[ferredoxin] + 16 ATP + 16 H2O = H2 + 8 oxidized [2Fe-2S]-[ferredoxin] + 2 NH4(+) + 16 ADP + 16 phosphate + 6 H(+). Functionally, the key enzymatic reactions in nitrogen fixation are catalyzed by the nitrogenase complex, which has 2 components: the iron protein and the molybdenum-iron protein. The polypeptide is Nitrogenase iron protein (Klebsiella pneumoniae (strain 342)).